The following is a 250-amino-acid chain: 5'-nucleotidase SurE (250 aa).

The a divalent metal cation site is built by aspartate 8, aspartate 9, serine 39, and asparagine 92.

It belongs to the SurE nucleotidase family. A divalent metal cation serves as cofactor.

Its subcellular location is the cytoplasm. The enzyme catalyses a ribonucleoside 5'-phosphate + H2O = a ribonucleoside + phosphate. Functionally, nucleotidase that shows phosphatase activity on nucleoside 5'-monophosphates. The protein is 5'-nucleotidase SurE of Vibrio cholerae serotype O1 (strain ATCC 39315 / El Tor Inaba N16961).